The sequence spans 306 residues: Uracil phosphoribosyltransferase homolog (306 aa).

2 disordered regions span residues Met-1–Pro-28 and Ser-58–Ala-87. Composition is skewed to polar residues over residues Cys-13–Pro-28 and Gly-70–Asn-79. Residues Arg-130, Arg-139, and Glu-173–Asn-176 contribute to the GTP site. Arg-183 is a 5-phospho-alpha-D-ribose 1-diphosphate binding site. Residues Arg-200 and Arg-229 each coordinate GTP. Tyr-235–Thr-243 contacts 5-phospho-alpha-D-ribose 1-diphosphate. Position 296–298 (Thr-296–Phe-298) interacts with uracil.

Belongs to the UPRTase family.

It localises to the cytoplasm. Its subcellular location is the nucleus. This chain is Uracil phosphoribosyltransferase homolog (UPRT), found in Bos taurus (Bovine).